The chain runs to 80 residues: Metallothionein-like protein 2B (80 aa).

It belongs to the metallothionein superfamily. Type 15 family. In terms of tissue distribution, highly expressed in stems. Expressed in leaves and rachis.

In terms of biological role, metallothioneins have a high content of cysteine residues that bind various heavy metals. The sequence is that of Metallothionein-like protein 2B (MT2B) from Oryza sativa subsp. japonica (Rice).